The sequence spans 367 residues: Teichoic acid glycerol-phosphate primase (367 aa).

The protein belongs to the CDP-glycerol glycerophosphotransferase family.

The protein resides in the cell membrane. The enzyme catalyses N-acetyl-beta-D-mannosaminyl-(1-&gt;4)-N-acetyl-alpha-D-glucosaminyl di-trans,octa-cis-undecaprenyl diphosphate + CDP-glycerol = 4-O-[(2R)-glycerylphospho]-N-acetyl-beta-D-mannosaminyl-(1-&gt;4)-N-acetyl-alpha-D-glucosaminyl di-trans,octa-cis-undecaprenyl diphosphate + CMP + H(+). It participates in cell wall biogenesis; poly(ribitol phosphate) teichoic acid biosynthesis. Functionally, catalyzes the addition of a single glycerol phosphate residue to the prenoldiphosphate-linked disaccharide. This Staphylococcus aureus (strain NCTC 8325 / PS 47) protein is Teichoic acid glycerol-phosphate primase (tarB).